Here is a 585-residue protein sequence, read N- to C-terminus: Type IV pilus assembly ATPase TfpB (585 aa).

346–351 is an ATP binding site; sequence GSGKTT. Positions 476, 479, 511, and 514 each coordinate Zn(2+).

Belongs to the GSP E family.

The protein resides in the cytoplasm. Functionally, ATPase component of the type IV pilus (T4P). Acts as a molecular motor to provide the energy that is required for biogenesis of the pilus and the extrusion of substrates generated in the cytoplasm. TfpB is required for optimal T4P extension and, consequently, efficient natural transformation. May play a role in initiating T4P extension. This Acinetobacter baylyi (strain ATCC 33305 / BD413 / ADP1) protein is Type IV pilus assembly ATPase TfpB.